Consider the following 453-residue polypeptide: Trigger factor (453 aa).

Residues 171 to 256 (GDRVTISFKG…ASLIEAPQDI (86 aa)) form the PPIase FKBP-type domain.

The protein belongs to the FKBP-type PPIase family. Tig subfamily.

Its subcellular location is the cytoplasm. It carries out the reaction [protein]-peptidylproline (omega=180) = [protein]-peptidylproline (omega=0). Its function is as follows. Involved in protein export. Acts as a chaperone by maintaining the newly synthesized protein in an open conformation. Functions as a peptidyl-prolyl cis-trans isomerase. This chain is Trigger factor, found in Nitrobacter hamburgensis (strain DSM 10229 / NCIMB 13809 / X14).